The primary structure comprises 74 residues: Protein SlyX homolog (74 aa).

The disordered stretch occupies residues 52 to 74 (LKQMQENQSTDSDPADEPPPPHY).

Belongs to the SlyX family.

The sequence is that of Protein SlyX homolog from Idiomarina loihiensis (strain ATCC BAA-735 / DSM 15497 / L2-TR).